We begin with the raw amino-acid sequence, 145 residues long: MDHYLKKLEDIYKKLEGHPFLFSPSKTNEKEFITLLNQALASTQLYRSIQQLFLTMYKLDPIGFINYIKTSKQEYLCLLINPKLVTKFLKITSFKIYINFRLKTFYISPNKYNNFYTAPSEEKANHLLKEEKTWAKIVEEGGEES.

It belongs to the asfivirus K145R family.

The protein resides in the virion. This is an uncharacterized protein from Ornithodoros (relapsing fever ticks).